A 348-amino-acid polypeptide reads, in one-letter code: Quinolinate synthase (348 aa).

Iminosuccinate is bound by residues His47 and Ser68. Residue Cys113 participates in [4Fe-4S] cluster binding. Iminosuccinate-binding positions include 139–141 (YAN) and Ser156. Position 200 (Cys200) interacts with [4Fe-4S] cluster. Iminosuccinate is bound by residues 226 to 228 (HPE) and Thr243. Residue Cys297 coordinates [4Fe-4S] cluster.

Belongs to the quinolinate synthase family. Type 1 subfamily. The cofactor is [4Fe-4S] cluster.

It is found in the cytoplasm. It carries out the reaction iminosuccinate + dihydroxyacetone phosphate = quinolinate + phosphate + 2 H2O + H(+). The protein operates within cofactor biosynthesis; NAD(+) biosynthesis; quinolinate from iminoaspartate: step 1/1. In terms of biological role, catalyzes the condensation of iminoaspartate with dihydroxyacetone phosphate to form quinolinate. This is Quinolinate synthase from Sodalis glossinidius (strain morsitans).